A 586-amino-acid chain; its full sequence is Capsid scaffolding protein (586 aa).

Residues His53, Ser123, and His142 each act as charge relay system in the active site. Residues 251–263 (SEETPENAIKDRS) show a composition bias toward basic and acidic residues. 4 disordered regions span residues 251–288 (SEET…HVPA), 330–364 (ARRD…DIWP), 458–486 (NKRD…YFPG), and 530–586 (SASN…MMAD). A compositionally biased stretch (polar residues) spans 264-284 (VSTQTAPSFDISESQQPSGQT). Residues 312-331 (EDMVYVPFEKYASLLAASAR) form an interaction with pAP region. Interaction with major capsid protein stretches follow at residues 566–586 (DAQT…MMAD) and 567–586 (AQTK…MMAD).

This sequence belongs to the herpesviridae capsid scaffolding protein family. As to quaternary structure, homomultimer. Interacts with major capsid protein. Exists in a monomer-dimer equilibrium with the dimer being the active species. Capsid scaffolding protein is cleaved by assemblin after formation of the spherical procapsid. As a result, the capsid obtains its mature, icosahedral shape. Cleavages occur at two or more sites: release (R-site) and maturation (M-site).

It localises to the host cytoplasm. It is found in the host nucleus. It carries out the reaction Cleaves -Ala-|-Ser- and -Ala-|-Ala- bonds in the scaffold protein.. Its function is as follows. Acts as a scaffold protein by binding major capsid protein in the cytoplasm, inducing the nuclear localization of both proteins. Multimerizes in the nucleus such as major capsid protein forms the icosahedral T=16 capsid. Autocatalytic cleavage releases the assembly protein, and subsequently abolishes interaction with major capsid protein. Cleavages products are evicted from the capsid before or during DNA packaging. Functionally, protease that plays an essential role in virion assembly within the nucleus. Catalyzes the cleavage of the assembly protein after formation of the spherical procapsid. By that cleavage, the capsid matures and gains its icosahedral shape. The cleavage sites seem to include -Ala-Ser-, -Ala-Ala-, as well as Ala-Thr bonds. Assemblin and cleavages products are evicted from the capsid before or during DNA packaging. Plays a major role in capsid assembly. Acts as a scaffold protein by binding major capsid protein. Multimerizes in the nucleus such as major capsid protein forms the icosahedral T=16 capsid. Cleaved by assemblin after capsid completion. The cleavages products are evicted from the capsid before or during DNA packaging. This Gallus gallus (Chicken) protein is Capsid scaffolding protein.